The sequence spans 330 residues: Peroxidase 55 (330 aa).

An N-terminal signal peptide occupies residues 1-30 (MDIRSDDAKKPMMMWFLGMLLFSMVAESNA). 4 disulfides stabilise this stretch: Cys-41–Cys-121, Cys-74–Cys-79, Cys-127–Cys-326, and Cys-206–Cys-238. Catalysis depends on His-72, which acts as the Proton acceptor. 5 residues coordinate Ca(2+): Asp-73, Val-76, Gly-78, Asp-80, and Ser-82. Residue Pro-169 coordinates substrate. His-199 contributes to the heme b binding site. Ca(2+) is bound at residue Thr-200. Asn-215 carries N-linked (GlcNAc...) asparagine glycosylation. Residues Asp-250, Ser-253, and Asp-258 each coordinate Ca(2+).

It belongs to the peroxidase family. Classical plant (class III) peroxidase subfamily. Heme b serves as cofactor. Ca(2+) is required as a cofactor. In terms of tissue distribution, slightly expressed in roots.

Its subcellular location is the secreted. The enzyme catalyses 2 a phenolic donor + H2O2 = 2 a phenolic radical donor + 2 H2O. Removal of H(2)O(2), oxidation of toxic reductants, biosynthesis and degradation of lignin, suberization, auxin catabolism, response to environmental stresses such as wounding, pathogen attack and oxidative stress. These functions might be dependent on each isozyme/isoform in each plant tissue. The protein is Peroxidase 55 (PER55) of Arabidopsis thaliana (Mouse-ear cress).